The following is a 147-amino-acid chain: Nucleoside diphosphate kinase (147 aa).

ATP is bound by residues Lys-9, Phe-57, Arg-85, Thr-91, Arg-102, and Asn-112. Catalysis depends on His-115, which acts as the Pros-phosphohistidine intermediate.

Belongs to the NDK family. It depends on Mg(2+) as a cofactor.

Its subcellular location is the cytoplasm. It catalyses the reaction a 2'-deoxyribonucleoside 5'-diphosphate + ATP = a 2'-deoxyribonucleoside 5'-triphosphate + ADP. The enzyme catalyses a ribonucleoside 5'-diphosphate + ATP = a ribonucleoside 5'-triphosphate + ADP. Major role in the synthesis of nucleoside triphosphates other than ATP. The ATP gamma phosphate is transferred to the NDP beta phosphate via a ping-pong mechanism, using a phosphorylated active-site intermediate. In Ignicoccus hospitalis (strain KIN4/I / DSM 18386 / JCM 14125), this protein is Nucleoside diphosphate kinase.